Consider the following 385-residue polypeptide: DNA replication and repair protein RecF (385 aa).

30 to 37 (GPNGFGKT) provides a ligand contact to ATP.

Belongs to the RecF family.

Its subcellular location is the cytoplasm. In terms of biological role, the RecF protein is involved in DNA metabolism; it is required for DNA replication and normal SOS inducibility. RecF binds preferentially to single-stranded, linear DNA. It also seems to bind ATP. This is DNA replication and repair protein RecF from Mycobacterium marinum (strain ATCC BAA-535 / M).